The primary structure comprises 193 residues: dCTP deaminase, dUMP-forming (193 aa).

Residues 101–106 (KSSLGR), aspartate 119, 127–129 (TLE), glutamine 148, tyrosine 162, and glutamine 174 contribute to the dCTP site. Catalysis depends on glutamate 129, which acts as the Proton donor/acceptor.

It belongs to the dCTP deaminase family. In terms of assembly, homotrimer.

The enzyme catalyses dCTP + 2 H2O = dUMP + NH4(+) + diphosphate. Its pathway is pyrimidine metabolism; dUMP biosynthesis; dUMP from dCTP: step 1/1. In terms of biological role, bifunctional enzyme that catalyzes both the deamination of dCTP to dUTP and the hydrolysis of dUTP to dUMP without releasing the toxic dUTP intermediate. This Bifidobacterium adolescentis (strain ATCC 15703 / DSM 20083 / NCTC 11814 / E194a) protein is dCTP deaminase, dUMP-forming.